The following is a 1056-amino-acid chain: Carbamoyl phosphate synthase large chain (1056 aa).

The tract at residues 1-397 (MPKKSHIKKV…AFKKALRSLD (397 aa)) is carboxyphosphate synthetic domain. The ATP site is built by Arg127, Arg167, Gly173, Gly174, Glu206, Val208, Glu213, Gly239, Ile240, His241, Gln282, and Glu294. Residues 131–323 (RDLMNAIGEP…IARVAAKIAI (193 aa)) enclose the ATP-grasp 1 domain. Mg(2+)-binding residues include Gln282, Glu294, and Asn296. Residues Gln282, Glu294, and Asn296 each contribute to the Mn(2+) site. The segment at 398 to 530 (NDMQQHTNPS…YSTWEEGCEL (133 aa)) is oligomerization domain. Positions 531 to 920 (VRDSAKKVLI…YKACTAADNT (390 aa)) are carbamoyl phosphate synthetic domain. The ATP-grasp 2 domain maps to 662–853 (SRLLTRLEIP…LAKIAAKVMV (192 aa)). ATP is bound by residues Arg698, Ser737, Leu739, Glu744, Gly769, Val770, His771, Ser772, Gln812, and Glu824. Mg(2+) is bound by residues Gln812, Glu824, and Asn826. Positions 812, 824, and 826 each coordinate Mn(2+). The MGS-like domain occupies 919–1056 (NTLPTTGNVF…EPLGHYHGLM (138 aa)). Residues 921-1056 (LPTTGNVFIS…EPLGHYHGLM (136 aa)) are allosteric domain.

The protein belongs to the CarB family. Composed of two chains; the small (or glutamine) chain promotes the hydrolysis of glutamine to ammonia, which is used by the large (or ammonia) chain to synthesize carbamoyl phosphate. Tetramer of heterodimers (alpha,beta)4. It depends on Mg(2+) as a cofactor. Requires Mn(2+) as cofactor.

It catalyses the reaction hydrogencarbonate + L-glutamine + 2 ATP + H2O = carbamoyl phosphate + L-glutamate + 2 ADP + phosphate + 2 H(+). The enzyme catalyses hydrogencarbonate + NH4(+) + 2 ATP = carbamoyl phosphate + 2 ADP + phosphate + 2 H(+). It functions in the pathway amino-acid biosynthesis; L-arginine biosynthesis; carbamoyl phosphate from bicarbonate: step 1/1. Its pathway is pyrimidine metabolism; UMP biosynthesis via de novo pathway; (S)-dihydroorotate from bicarbonate: step 1/3. Large subunit of the glutamine-dependent carbamoyl phosphate synthetase (CPSase). CPSase catalyzes the formation of carbamoyl phosphate from the ammonia moiety of glutamine, carbonate, and phosphate donated by ATP, constituting the first step of 2 biosynthetic pathways, one leading to arginine and/or urea and the other to pyrimidine nucleotides. The large subunit (synthetase) binds the substrates ammonia (free or transferred from glutamine from the small subunit), hydrogencarbonate and ATP and carries out an ATP-coupled ligase reaction, activating hydrogencarbonate by forming carboxy phosphate which reacts with ammonia to form carbamoyl phosphate. The chain is Carbamoyl phosphate synthase large chain from Methanoculleus marisnigri (strain ATCC 35101 / DSM 1498 / JR1).